Reading from the N-terminus, the 467-residue chain is UDP-glycosyltransferase 90A2 (467 aa).

UDP-alpha-D-glucose contacts are provided by residues S289, 341 to 343 (VDQ), 358 to 366 (HCGWNSLTE), and 380 to 383 (AAEQ).

Belongs to the UDP-glycosyltransferase family.

The protein is UDP-glycosyltransferase 90A2 (UGT90A2) of Arabidopsis thaliana (Mouse-ear cress).